We begin with the raw amino-acid sequence, 901 residues long: Desmocollin-2 (901 aa).

The signal sequence occupies residues 1 to 27 (MEAARPSGSWNGALCRLLLLTLAILIF). A propeptide spanning residues 28-135 (ASDACKNVTL…KEKVLRRAKR (108 aa)) is cleaved from the precursor. N-linked (GlcNAc...) asparagine glycans are attached at residues Asn-34 and Asn-166. 5 Cadherin domains span residues 136–243 (RWAP…YPIF), 244–355 (TEET…LPTF), 356–471 (TRTS…GPEC), 472–579 (NPPI…FIPK), and 580–694 (KTVI…QLGK). Over 136–694 (RWAPIPCSML…IGGGGVQLGK (559 aa)) the chain is Extracellular. Asn-392 is a glycosylation site (N-linked (GlcNAc...) (complex) asparagine). N-linked (GlcNAc...) asparagine glycans are attached at residues Asn-546 and Asn-629. The helical transmembrane segment at 695-715 (WAILAILLGIALLFCILFTLV) threads the bilayer. Residues 716–901 (CGASGTSKQP…RTLAEACMKR (186 aa)) lie on the Cytoplasmic side of the membrane. Phosphoserine occurs at positions 864, 868, and 873.

In terms of assembly, interacts with DSP, PKP2 and JUP. Interacts with DSG3; the interaction may limit the interaction of DSC3 with p38MAPK family members and therefore repress p38MAPK signaling activation. As to expression, expressed at intercalated disks in the heart, where it is colocalized with CDH2 (at protein level). Expressed in intestinal mucosal cells (at protein level).

The protein localises to the cell membrane. The protein resides in the cell junction. Its subcellular location is the desmosome. Its function is as follows. A component of desmosome cell-cell junctions which are required for positive regulation of cellular adhesion. Promotes timely incorporation of DSG2 into desmosome intercellular junctions and promotes interaction of desmosome cell junctions with intermediate filament cytokeratin, via modulation of DSP phosphorylation. Plays an important role in desmosome-mediated maintenance of intestinal epithelial cell intercellular adhesion strength and barrier function. Positively regulates wound healing of intestinal mucosa via promotion of epithelial cell migration, and also plays a role in mechanotransduction of force between intestinal epithelial cells and extracellular matrix. May contribute to epidermal cell positioning (stratification) by mediating differential adhesiveness between cells that express different isoforms. May promote p38MAPK signaling activation that facilitates keratinocyte migration. This chain is Desmocollin-2, found in Homo sapiens (Human).